Consider the following 397-residue polypeptide: Acetate kinase 2 (397 aa).

Mg(2+) is bound at residue Asn8. Lys15 lines the ATP pocket. Arg89 lines the substrate pocket. Asp146 (proton donor/acceptor) is an active-site residue. ATP is bound by residues His206 to Gly210, Asp281 to Arg283, and Gly329 to Asn333. Glu380 serves as a coordination point for Mg(2+).

It belongs to the acetokinase family. Homodimer. Requires Mg(2+) as cofactor. The cofactor is Mn(2+).

It is found in the cytoplasm. The enzyme catalyses acetate + ATP = acetyl phosphate + ADP. It participates in metabolic intermediate biosynthesis; acetyl-CoA biosynthesis; acetyl-CoA from acetate: step 1/2. In terms of biological role, catalyzes the formation of acetyl phosphate from acetate and ATP. Can also catalyze the reverse reaction. This Listeria monocytogenes serovar 1/2a (strain ATCC BAA-679 / EGD-e) protein is Acetate kinase 2.